The primary structure comprises 741 residues: Phosphoribosylformylglycinamidine synthase subunit PurL (741 aa).

Residue histidine 53 is part of the active site. The ATP site is built by tyrosine 56 and lysine 95. Residue glutamate 97 coordinates Mg(2+). Substrate contacts are provided by residues 98–101 (SHNH) and arginine 120. Histidine 99 functions as the Proton acceptor in the catalytic mechanism. Aspartate 121 contributes to the Mg(2+) binding site. Substrate is bound at residue glutamine 244. Aspartate 274 contacts Mg(2+). 318–320 (ESQ) contributes to the substrate binding site. ATP contacts are provided by aspartate 501 and glycine 538. Residue asparagine 539 participates in Mg(2+) binding. Serine 541 provides a ligand contact to substrate.

It belongs to the FGAMS family. Monomer. Part of the FGAM synthase complex composed of 1 PurL, 1 PurQ and 2 PurS subunits.

Its subcellular location is the cytoplasm. The catalysed reaction is N(2)-formyl-N(1)-(5-phospho-beta-D-ribosyl)glycinamide + L-glutamine + ATP + H2O = 2-formamido-N(1)-(5-O-phospho-beta-D-ribosyl)acetamidine + L-glutamate + ADP + phosphate + H(+). It participates in purine metabolism; IMP biosynthesis via de novo pathway; 5-amino-1-(5-phospho-D-ribosyl)imidazole from N(2)-formyl-N(1)-(5-phospho-D-ribosyl)glycinamide: step 1/2. Part of the phosphoribosylformylglycinamidine synthase complex involved in the purines biosynthetic pathway. Catalyzes the ATP-dependent conversion of formylglycinamide ribonucleotide (FGAR) and glutamine to yield formylglycinamidine ribonucleotide (FGAM) and glutamate. The FGAM synthase complex is composed of three subunits. PurQ produces an ammonia molecule by converting glutamine to glutamate. PurL transfers the ammonia molecule to FGAR to form FGAM in an ATP-dependent manner. PurS interacts with PurQ and PurL and is thought to assist in the transfer of the ammonia molecule from PurQ to PurL. This is Phosphoribosylformylglycinamidine synthase subunit PurL from Limosilactobacillus fermentum (strain NBRC 3956 / LMG 18251) (Lactobacillus fermentum).